Consider the following 403-residue polypeptide: Nucleolar protein 13 (403 aa).

Basic and acidic residues-rich tracts occupy residues 1–35 and 75–97; these read MSETELSKEDAVTKKDNEEQVKKALLDPTKKRKAE and KSIEEYKEDAEKKKSGASEKDAQ. Disordered stretches follow at residues 1–43 and 72–116; these read MSET…IDLK and IDPK…EVVK. N-acetylserine is present on Ser2. Phosphoserine is present on Ser2. The segment covering 99 to 108 has biased composition (polar residues); sequence EESTINTPTG. Position 105 is a phosphothreonine (Thr105). RRM domains lie at 125–219 and 239–317; these read YGVW…DSEN and RILF…YGED. Residues 313-329 are compositionally biased toward basic and acidic residues; that stretch reads EYGEDRSKRQVRKKVEN. The tract at residues 313 to 403 is disordered; it reads EYGEDRSKRQ…PSQGKKVKFD (91 aa). Residues 330-344 show a composition bias toward polar residues; sequence VSRNNSSSFDISNNK. At Ser335 the chain carries Phosphoserine. A compositionally biased stretch (basic and acidic residues) spans 345 to 361; sequence GYDRAGQDNGSKPEYKR. Residues 371-381 show a composition bias toward polar residues; it reads DSNNRTKSSVA.

The protein localises to the nucleus. It localises to the nucleolus. The sequence is that of Nucleolar protein 13 (NOP13) from Saccharomyces cerevisiae (strain ATCC 204508 / S288c) (Baker's yeast).